We begin with the raw amino-acid sequence, 231 residues long: Flagellar L-ring protein (231 aa).

An N-terminal signal peptide occupies residues 1–18; that stretch reads MNRYVSVLALSGIAVLAG. The N-palmitoyl cysteine moiety is linked to residue Cys19. A lipid anchor (S-diacylglycerol cysteine) is attached at Cys19.

Belongs to the FlgH family. In terms of assembly, the basal body constitutes a major portion of the flagellar organelle and consists of four rings (L,P,S, and M) mounted on a central rod.

The protein resides in the cell outer membrane. Its subcellular location is the bacterial flagellum basal body. Functionally, assembles around the rod to form the L-ring and probably protects the motor/basal body from shearing forces during rotation. This Pseudomonas fluorescens (strain SBW25) protein is Flagellar L-ring protein.